The sequence spans 453 residues: Phosphoglucosamine mutase (453 aa).

Residue S110 is the Phosphoserine intermediate of the active site. The Mg(2+) site is built by S110, D248, D250, and D252. S110 is modified (phosphoserine).

This sequence belongs to the phosphohexose mutase family. The cofactor is Mg(2+). In terms of processing, activated by phosphorylation.

It catalyses the reaction alpha-D-glucosamine 1-phosphate = D-glucosamine 6-phosphate. Catalyzes the conversion of glucosamine-6-phosphate to glucosamine-1-phosphate. The polypeptide is Phosphoglucosamine mutase (Mycolicibacterium smegmatis (strain ATCC 700084 / mc(2)155) (Mycobacterium smegmatis)).